We begin with the raw amino-acid sequence, 372 residues long: Protein RecA (372 aa).

77–84 (GPESSGKT) is an ATP binding site.

It belongs to the RecA family.

The protein resides in the cytoplasm. Can catalyze the hydrolysis of ATP in the presence of single-stranded DNA, the ATP-dependent uptake of single-stranded DNA by duplex DNA, and the ATP-dependent hybridization of homologous single-stranded DNAs. It interacts with LexA causing its activation and leading to its autocatalytic cleavage. The polypeptide is Protein RecA (Corynebacterium diphtheriae (strain ATCC 700971 / NCTC 13129 / Biotype gravis)).